We begin with the raw amino-acid sequence, 306 residues long: 4-hydroxy-3-methylbut-2-enyl diphosphate reductase (306 aa).

Residue Cys12 coordinates [4Fe-4S] cluster. The (2E)-4-hydroxy-3-methylbut-2-enyl diphosphate site is built by His41 and His74. Dimethylallyl diphosphate is bound by residues His41 and His74. The isopentenyl diphosphate site is built by His41 and His74. [4Fe-4S] cluster is bound at residue Cys96. His124 contacts (2E)-4-hydroxy-3-methylbut-2-enyl diphosphate. His124 provides a ligand contact to dimethylallyl diphosphate. An isopentenyl diphosphate-binding site is contributed by His124. The active-site Proton donor is Glu126. Residue Thr164 participates in (2E)-4-hydroxy-3-methylbut-2-enyl diphosphate binding. A [4Fe-4S] cluster-binding site is contributed by Cys194. (2E)-4-hydroxy-3-methylbut-2-enyl diphosphate is bound by residues Ser222, Ser223, Asn224, and Ser266. Dimethylallyl diphosphate is bound by residues Ser222, Ser223, Asn224, and Ser266. Isopentenyl diphosphate is bound by residues Ser222, Ser223, Asn224, and Ser266.

The protein belongs to the IspH family. [4Fe-4S] cluster is required as a cofactor.

The catalysed reaction is isopentenyl diphosphate + 2 oxidized [2Fe-2S]-[ferredoxin] + H2O = (2E)-4-hydroxy-3-methylbut-2-enyl diphosphate + 2 reduced [2Fe-2S]-[ferredoxin] + 2 H(+). It catalyses the reaction dimethylallyl diphosphate + 2 oxidized [2Fe-2S]-[ferredoxin] + H2O = (2E)-4-hydroxy-3-methylbut-2-enyl diphosphate + 2 reduced [2Fe-2S]-[ferredoxin] + 2 H(+). The protein operates within isoprenoid biosynthesis; dimethylallyl diphosphate biosynthesis; dimethylallyl diphosphate from (2E)-4-hydroxy-3-methylbutenyl diphosphate: step 1/1. It functions in the pathway isoprenoid biosynthesis; isopentenyl diphosphate biosynthesis via DXP pathway; isopentenyl diphosphate from 1-deoxy-D-xylulose 5-phosphate: step 6/6. Functionally, catalyzes the conversion of 1-hydroxy-2-methyl-2-(E)-butenyl 4-diphosphate (HMBPP) into a mixture of isopentenyl diphosphate (IPP) and dimethylallyl diphosphate (DMAPP). Acts in the terminal step of the DOXP/MEP pathway for isoprenoid precursor biosynthesis. The chain is 4-hydroxy-3-methylbut-2-enyl diphosphate reductase from Dechloromonas aromatica (strain RCB).